The primary structure comprises 290 residues: ATP synthase subunit a (290 aa).

The next 6 membrane-spanning stretches (helical) occupy residues 44–64 (AFHV…ILLF), 104–124 (VIAP…AIDL), 161–181 (LSVF…GGFI), 194–214 (ILVQ…TLVA), 233–253 (VFIL…GMGV), and 260–280 (AVFH…LTIV).

The protein belongs to the ATPase A chain family. In terms of assembly, F-type ATPases have 2 components, CF(1) - the catalytic core - and CF(0) - the membrane proton channel. CF(1) has five subunits: alpha(3), beta(3), gamma(1), delta(1), epsilon(1). CF(0) has three main subunits: a(1), b(2) and c(9-12). The alpha and beta chains form an alternating ring which encloses part of the gamma chain. CF(1) is attached to CF(0) by a central stalk formed by the gamma and epsilon chains, while a peripheral stalk is formed by the delta and b chains.

It is found in the cell inner membrane. Key component of the proton channel; it plays a direct role in the translocation of protons across the membrane. This chain is ATP synthase subunit a, found in Pseudomonas fluorescens (strain ATCC BAA-477 / NRRL B-23932 / Pf-5).